We begin with the raw amino-acid sequence, 328 residues long: Malate dehydrogenase (328 aa).

11 to 17 provides a ligand contact to NAD(+); it reads GAAGQIG. Substrate is bound by residues Arg94 and Arg100. NAD(+)-binding positions include Asn107, Gln114, and 131-133; that span reads VGN. Asn133 and Arg164 together coordinate substrate. The active-site Proton acceptor is the His189.

It belongs to the LDH/MDH superfamily. MDH type 2 family.

The enzyme catalyses (S)-malate + NAD(+) = oxaloacetate + NADH + H(+). Functionally, catalyzes the reversible oxidation of malate to oxaloacetate. The sequence is that of Malate dehydrogenase from Xylella fastidiosa (strain Temecula1 / ATCC 700964).